The following is a 198-amino-acid chain: Probable thymidylate kinase (198 aa).

An ATP-binding site is contributed by G7–S14.

This sequence belongs to the thymidylate kinase family.

It catalyses the reaction dTMP + ATP = dTDP + ADP. In Methanocorpusculum labreanum (strain ATCC 43576 / DSM 4855 / Z), this protein is Probable thymidylate kinase.